We begin with the raw amino-acid sequence, 215 residues long: MVMENKFLFLGAPGVGKGTLAKQVANTTGLFHLSTGDIFRSVMQEQGALSQTLAHYMNQGLYVPDELTNQTFWHFVTTHQNELHKGFILDGYPRTLNQLEFLQSKLQLDQVFHLKLSDPQVLVARILNRLVCPSCGSVYNKQSKPPLKANQCDRCHATLQARNDDTEAVILKRLTLYEDTVKPLIEAFTKQGILTVIEAQLPLEQQVNLVQQLVH.

14 to 19 (GVGKGT) is an ATP binding site. The interval 34–63 (STGDIFRSVMQEQGALSQTLAHYMNQGLYV) is NMP. AMP contacts are provided by residues Thr-35, Arg-40, 61-63 (LYV), 91-94 (GYPR), and Gln-98. The segment at 128–165 (NRLVCPSCGSVYNKQSKPPLKANQCDRCHATLQARNDD) is LID. Residue Arg-129 coordinates ATP. Cys-132 and Cys-135 together coordinate Zn(2+). 138-139 (VY) contributes to the ATP binding site. The Zn(2+) site is built by Cys-152 and Cys-155. AMP is bound by residues Arg-162 and Arg-173. An ATP-binding site is contributed by Gln-211.

Belongs to the adenylate kinase family. As to quaternary structure, monomer.

The protein localises to the cytoplasm. The enzyme catalyses AMP + ATP = 2 ADP. Its pathway is purine metabolism; AMP biosynthesis via salvage pathway; AMP from ADP: step 1/1. Functionally, catalyzes the reversible transfer of the terminal phosphate group between ATP and AMP. Plays an important role in cellular energy homeostasis and in adenine nucleotide metabolism. This is Adenylate kinase from Mycoplasma pneumoniae (strain ATCC 29342 / M129 / Subtype 1) (Mycoplasmoides pneumoniae).